We begin with the raw amino-acid sequence, 248 residues long: 3-deoxy-manno-octulosonate cytidylyltransferase (248 aa).

The protein belongs to the KdsB family.

The protein resides in the cytoplasm. The catalysed reaction is 3-deoxy-alpha-D-manno-oct-2-ulosonate + CTP = CMP-3-deoxy-beta-D-manno-octulosonate + diphosphate. It participates in nucleotide-sugar biosynthesis; CMP-3-deoxy-D-manno-octulosonate biosynthesis; CMP-3-deoxy-D-manno-octulosonate from 3-deoxy-D-manno-octulosonate and CTP: step 1/1. The protein operates within bacterial outer membrane biogenesis; lipopolysaccharide biosynthesis. Activates KDO (a required 8-carbon sugar) for incorporation into bacterial lipopolysaccharide in Gram-negative bacteria. The sequence is that of 3-deoxy-manno-octulosonate cytidylyltransferase from Salmonella agona (strain SL483).